The following is a 461-amino-acid chain: Ornithine decarboxylase (461 aa).

Residue K69 is modified to N6-(pyridoxal phosphate)lysine. Residues S200, G237, and 274-277 (EPGR) each bind pyridoxal 5'-phosphate. S303 bears the Phosphoserine; by CK2 mark. A substrate-binding site is contributed by 331–332 (YD). The Proton donor; shared with dimeric partner role is filled by C360. C360 carries the post-translational modification S-nitrosocysteine. D361 is a binding site for substrate. Position 389 (Y389) interacts with pyridoxal 5'-phosphate.

The protein belongs to the Orn/Lys/Arg decarboxylase class-II family. In terms of assembly, homodimer. Only the dimer is catalytically active, as the active sites are constructed of residues from both monomers. Pyridoxal 5'-phosphate serves as cofactor.

The enzyme catalyses L-ornithine + H(+) = putrescine + CO2. Its pathway is amine and polyamine biosynthesis; putrescine biosynthesis via L-ornithine pathway; putrescine from L-ornithine: step 1/1. Its activity is regulated as follows. Inhibited by antizymes (AZs) OAZ1, OAZ2 and OAZ3 in response to polyamine levels. AZs inhibit the assembly of the functional homodimer by binding to ODC monomers. Additionally, OAZ1 targets ODC monomers for ubiquitin-independent proteolytic destruction by the 26S proteasome. In terms of biological role, catalyzes the first and rate-limiting step of polyamine biosynthesis that converts ornithine into putrescine, which is the precursor for the polyamines, spermidine and spermine. Polyamines are essential for cell proliferation and are implicated in cellular processes, ranging from DNA replication to apoptosis. The sequence is that of Ornithine decarboxylase (Odc1) from Mus pahari (Gairdner's shrew-mouse).